Consider the following 546-residue polypeptide: Crossover junction endonuclease EME1A (546 aa).

2 disordered regions span residues 1 to 55 (MSDF…FLDE) and 88 to 232 (VISL…REKQ). The segment covering 28–49 (PTDLNLDTEPSLQKQPPGSAST) has biased composition (polar residues). Composition is skewed to basic and acidic residues over residues 103–120 (SSKK…KPCR) and 149–167 (DAIE…VEKM). The segment covering 173–183 (TITSKSTSLSA) has biased composition (polar residues). Residues 188–245 (KKKMSKDEKTRAAEEKKLQKEQEKLQKAASKAEDAEHKKLEREKQKWAKEKDKALKCI) are a coiled coil. The segment covering 192–232 (SKDEKTRAAEEKKLQKEQEKLQKAASKAEDAEHKKLEREKQ) has biased composition (basic and acidic residues). Positions 278-478 (NPIQRSIVWT…PSLKSLLKVY (201 aa)) constitute an ERCC4 domain.

It belongs to the EME1/MMS4 family. In terms of assembly, forms a heterodimer with MUS81. The cofactor is Mg(2+). It depends on Ca(2+) as a cofactor.

Its subcellular location is the nucleus. Functionally, interacts with MUS81 to form a DNA structure-specific endonuclease with substrate preference for branched DNA structures with a 5'-end at the branch nick. Typical substrates include 3'-flap structures, D-loops, replication forks, nicked Holliday junctions and also intact Holliday junctions with a reduced efficiency. May be required in mitosis for the processing of stalled or collapsed replication fork intermediates. Plays a role in DNA repair and in genotoxic stress-induced homologous recombination (HR) in somatic cells. Mediates a subset of meiotic recombination events that are insensitive to crossover interference. The polypeptide is Crossover junction endonuclease EME1A (EME1A) (Arabidopsis thaliana (Mouse-ear cress)).